Here is a 419-residue protein sequence, read N- to C-terminus: uncharacterized protein (419 aa).

This is an uncharacterized protein from Schizosaccharomyces pombe (strain 972 / ATCC 24843) (Fission yeast).